Here is a 654-residue protein sequence, read N- to C-terminus: NADH-ubiquinone oxidoreductase chain 5 (654 aa).

16 helical membrane-spanning segments follow: residues Met1–Arg21, Leu30–Val50, Phe76–Val96, Phe113–Tyr133, Val135–Phe155, Phe178–Phe198, Leu200–Ala220, Thr241–Leu261, Leu274–Leu294, Val301–Ser320, Val324–Val346, Leu365–Phe385, Ser406–Ile426, Pro451–Val471, Phe510–Phe530, and Thr612–Gly632.

The protein belongs to the complex I subunit 5 family.

It localises to the mitochondrion inner membrane. The catalysed reaction is a ubiquinone + NADH + 5 H(+)(in) = a ubiquinol + NAD(+) + 4 H(+)(out). Its function is as follows. Core subunit of the mitochondrial membrane respiratory chain NADH dehydrogenase (Complex I) that is believed to belong to the minimal assembly required for catalysis. Complex I functions in the transfer of electrons from NADH to the respiratory chain. The immediate electron acceptor for the enzyme is believed to be ubiquinone. In Rhizopus stolonifer (Rhizopus nigricans), this protein is NADH-ubiquinone oxidoreductase chain 5 (ND5).